Consider the following 75-residue polypeptide: M-myrmeciitoxin-Mp2a (75 aa).

Positions 1 to 26 (MKLSCLLLTLAIIFVLTIVHAPNVEA) are cleaved as a signal peptide. Residues 27-48 (KALADPESDAVGFADAVGEADP) constitute a propeptide that is removed on maturation. A Leucine amide modification is found at Leu74.

It belongs to the formicidae venom precursor-01 superfamily. Ant pilosulin family. Heterodimer with M-MIITX-Mp2b (pilosin-3b) (AC P0C023); disulfide-linked. Only heterodimers (and not monomers) have been identified in the venom. Expressed by the venom gland.

The protein localises to the secreted. In terms of biological role, heterodimer protein that may serve both defensive (pain-inducing) and predatory (insecticidal) roles. Has membrane-disrupting activity and shows induction of non-specific calcium influx into cells,. Shows broad-spectrum activity against a diverse range of bacteria, and cell lines, as well as hemolytic activity (EC(50)=2.18 uM). In vivo, shows moderate insecticidal activity against D.melanogaster and potent anthelmintic activity against the veterinary nematode H.contortus. In addition, intraplantar injection into mice induces nocifensive behavior and mechanical allodynia. This Myrmecia pilosula (Jack jumper ant) protein is M-myrmeciitoxin-Mp2a.